Here is a 206-residue protein sequence, read N- to C-terminus: Oligoribonuclease (206 aa).

Residues 20–183 form the Exonuclease domain; the sequence is LVWLDMEMTG…ADIHESIDEL (164 aa). Residue Tyr-141 is part of the active site.

It belongs to the oligoribonuclease family.

It localises to the cytoplasm. 3'-to-5' exoribonuclease specific for small oligoribonucleotides. The sequence is that of Oligoribonuclease from Burkholderia cenocepacia (strain HI2424).